Consider the following 450-residue polypeptide: Bicarbonate-binding protein CmpA (450 aa).

The tat-type signal signal peptide spans 1-36; the sequence is MNEFQPVNRRQFLFTLGATAASAILLKGCGNPPSSS.

Belongs to the CmpA/NrtA family. In terms of assembly, the complex is composed of two ATP-binding proteins (CmpC and CmpD), a transmembrane protein (CmpB) and a solute-binding protein (CmpA). Post-translationally, predicted to be exported by the Tat system. The position of the signal peptide cleavage has not been experimentally proven.

It is found in the cell inner membrane. Its function is as follows. Part of the ABC transporter complex CmpABCD involved in bicarbonate transport. Binds bicarbonate with high affinity. The sequence is that of Bicarbonate-binding protein CmpA (cmpA) from Synechococcus sp. (strain ATCC 27144 / PCC 6301 / SAUG 1402/1) (Anacystis nidulans).